A 367-amino-acid polypeptide reads, in one-letter code: MLLTALAVLFASTGCQARLSVSGTNLNYNGHHIFLSGANQAWVNYARDFGHNQYSKGKSTFESTLSDIQSHGGNSVRVWLHIEGESTPEFDNNGYVTGIDNTLISDMRAYLHAAQRHNILIFFTLWNGAVKQSTHYRLNGLMVDTRKLQSYIDHALKPMANALKNEKALGGWDIMNEPEGEIKPGESSSEPCFDTRHLSGSGAGWAGHLYSAQEIGRFVNWQAAAIKEVDPGAMVTVGSWNMKADTDAMGFHNLYSDHCLVKAGGKQSGTLSFYQVHTYDWQNHFGNESPFKHSFSNFRLKKPMVIGEFNQEHGAGMSSESMFEWAYTKGYSGAWTWSRTDVSWNNQLRGIQHLKSRTDHGQVQFGL.

The first 17 residues, 1 to 17, serve as a signal peptide directing secretion; the sequence is MLLTALAVLFASTGCQA. The substrate site is built by tryptophan 79 and asparagine 176. Glutamate 177 (proton donor) is an active-site residue. The cysteines at positions 192 and 259 are disulfide-linked. Residues tryptophan 205, tryptophan 240, and tyrosine 279 each contribute to the substrate site. Glutamate 308 acts as the Nucleophile in catalysis. Residue tryptophan 337 participates in substrate binding.

In terms of assembly, monomer. The disulfide bond between Cys-192 and Cys-259 has not been observed in X-ray crystallography. This may be a consequence of the X-ray radiation.

It catalyses the reaction Random hydrolysis of (1-&gt;4)-beta-D-mannosidic linkages in mannans, galactomannans and glucomannans.. Functionally, hydrolyzes 1,4-beta linked polysaccharide backbones of mannans. Hydrolyzes mannohexaose (M6) preferentially to mannotriose (M4) and less preferentially to mannotetraose (M3), mannopentaose (M5), and mannobiose (M2); hydrolyzes M5 preferentially to M2, and M3, and less preferentially to mannotetraose M4; hydrolyzes M4 preferentially to M3, and less preferentially to mannose (M1), plus very little M2. Does not hydrolyze mannobiose or mannotriose. Does not hydrolyze xlyan, starch, cellulose or galactose. This Mytilus edulis (Blue mussel) protein is Mannan endo-1,4-beta-mannosidase.